The primary structure comprises 123 residues: Putative EG45-like domain containing protein 1 (123 aa).

The first 21 residues, 1–21, serve as a signal peptide directing secretion; that stretch reads MSKSIVFFSTVLVFLFSFSYA. The 100-residue stretch at 24 to 123 folds into the Expansin-like EG45 domain; sequence GIATFYTSYT…AGIINIDYFP (100 aa).

The protein localises to the secreted. Might have a systemic role in water and solute homeostasis. This chain is Putative EG45-like domain containing protein 1 (EGC1), found in Arabidopsis thaliana (Mouse-ear cress).